The chain runs to 534 residues: Thromboxane-A synthase (534 aa).

The Cytoplasmic portion of the chain corresponds to 1-10 (MEVLGFLSPE). The helical transmembrane segment at 11–31 (LNGPMVTMALAVVLLALLKWY) threads the bilayer. Over 32-75 (STSAFSRLEKLGIRHPKPSPFIGNLTFFRQGFWESHMELRKQYG) the chain is Lumenal. Residues 76 to 96 (PLSGYYLGRRMIVVISDPDMI) form a helical membrane-spanning segment. Over 97–223 (KQVLAEKFSN…RRFFAFSVPR (127 aa)) the chain is Cytoplasmic. A helical transmembrane segment spans residues 224 to 244 (LILVLILSFPSIMVPLARILP). Over 245–336 (NKKRDEVNGF…LTVDEVVGQA (92 aa)) the chain is Lumenal. The chain crosses the membrane as a helical span at residues 337–357 (FLFLIAGYEIITNTLSFVTYL). Residues 358–534 (LATNPDCQEK…NGVYIRIVPR (177 aa)) are Cytoplasmic-facing. Cys480 contacts heme.

The protein belongs to the cytochrome P450 family. In terms of assembly, monomer. It depends on heme as a cofactor. In terms of tissue distribution, expressed in lung, kidney and thymus.

It is found in the endoplasmic reticulum membrane. The enzyme catalyses prostaglandin H2 = thromboxane A2. It catalyses the reaction prostaglandin H2 = (12S)-hydroxy-(5Z,8E,10E)-heptadecatrienoate + malonaldehyde. It carries out the reaction a hydroperoxyeicosatetraenoate = an oxoeicosatetraenoate + H2O. The catalysed reaction is (15S)-hydroperoxy-(5Z,8Z,11Z,13E)-eicosatetraenoate = 15-oxo-(5Z,8Z,11Z,13E)-eicosatetraenoate + H2O. The enzyme catalyses (15S)-hydroperoxy-(5Z,8Z,11Z,13E)-eicosatetraenoate + AH2 = (15S)-hydroxy-(5Z,8Z,11Z,13E)-eicosatetraenoate + A + H2O. In terms of biological role, catalyzes the conversion of prostaglandin H2 (PGH2) to thromboxane A2 (TXA2), a potent inducer of blood vessel constriction and platelet aggregation. Also cleaves PGH2 to 12-hydroxy-heptadecatrienoicacid (12-HHT) and malondialdehyde, which is known to act as a mediator of DNA damage. 12-HHT and malondialdehyde are formed stoichiometrically in the same amounts as TXA2. Additionally, displays dehydratase activity, toward (15S)-hydroperoxy-(5Z,8Z,11Z,13E)-eicosatetraenoate (15(S)-HPETE) producing 15-KETE and 15-HETE. This chain is Thromboxane-A synthase (TBXAS1), found in Sus scrofa (Pig).